The chain runs to 420 residues: Glucose-1-phosphate adenylyltransferase (420 aa).

Residues tyrosine 107, glycine 172, 187–188, and serine 205 each bind alpha-D-glucose 1-phosphate; that span reads EK.

It belongs to the bacterial/plant glucose-1-phosphate adenylyltransferase family. As to quaternary structure, homotetramer.

The enzyme catalyses alpha-D-glucose 1-phosphate + ATP + H(+) = ADP-alpha-D-glucose + diphosphate. The protein operates within glycan biosynthesis; glycogen biosynthesis. Functionally, involved in the biosynthesis of ADP-glucose, a building block required for the elongation reactions to produce glycogen. Catalyzes the reaction between ATP and alpha-D-glucose 1-phosphate (G1P) to produce pyrophosphate and ADP-Glc. In Rhizobium radiobacter (Agrobacterium tumefaciens), this protein is Glucose-1-phosphate adenylyltransferase.